A 171-amino-acid polypeptide reads, in one-letter code: Transcription factor E (171 aa).

One can recognise an HTH TFE/IIEalpha-type domain in the interval 1 to 81; that stretch reads MLNLAKELVG…YWKVNVNQIN (81 aa).

Belongs to the TFE family. As to quaternary structure, monomer. Interaction with RNA polymerase subunits RpoF and RpoE is necessary for Tfe stimulatory transcription activity. Able to interact with Tbp and RNA polymerase in the absence of DNA promoter. Interacts both with the preinitiation and elongation complexes.

In terms of biological role, transcription factor that plays a role in the activation of archaeal genes transcribed by RNA polymerase. Facilitates transcription initiation by enhancing TATA-box recognition by TATA-box-binding protein (Tbp), and transcription factor B (Tfb) and RNA polymerase recruitment. Not absolutely required for transcription in vitro, but particularly important in cases where Tbp or Tfb function is not optimal. It dynamically alters the nucleic acid-binding properties of RNA polymerases by stabilizing the initiation complex and destabilizing elongation complexes. Seems to translocate with the RNA polymerase following initiation and acts by binding to the non template strand of the transcription bubble in elongation complexes. The protein is Transcription factor E of Sulfolobus acidocaldarius (strain ATCC 33909 / DSM 639 / JCM 8929 / NBRC 15157 / NCIMB 11770).